A 637-amino-acid polypeptide reads, in one-letter code: 3D-(3,5/4)-trihydroxycyclohexane-1,2-dione hydrolase (637 aa).

Residue E66 participates in thiamine diphosphate binding. The tract at residues S442–G522 is thiamine pyrophosphate binding. 2 residues coordinate Mg(2+): D493 and N520.

This sequence belongs to the TPP enzyme family. The cofactor is Mg(2+). Requires thiamine diphosphate as cofactor.

The catalysed reaction is 3D-3,5/4-trihydroxycyclohexane-1,2-dione + H2O = 5-deoxy-D-glucuronate + H(+). Its pathway is polyol metabolism; myo-inositol degradation into acetyl-CoA; acetyl-CoA from myo-inositol: step 3/7. In terms of biological role, involved in the cleavage of the C1-C2 bond of 3D-(3,5/4)-trihydroxycyclohexane-1,2-dione (THcHDO) to yield 5-deoxy-glucuronate (5DG). In Shouchella clausii (strain KSM-K16) (Alkalihalobacillus clausii), this protein is 3D-(3,5/4)-trihydroxycyclohexane-1,2-dione hydrolase.